A 318-amino-acid chain; its full sequence is Geranylfarnesyl diphosphate synthase (318 aa).

Positions 31, 34, and 65 each coordinate isopentenyl diphosphate. Mg(2+) contacts are provided by Asp72 and Asp76. Arg81 contributes to the an all-trans-polyprenyl diphosphate binding site. Arg82 contacts isopentenyl diphosphate. Residues Lys166, Thr167, and Gln204 each contribute to the an all-trans-polyprenyl diphosphate site.

Belongs to the FPP/GGPP synthase family. Homodimer. It depends on Mg(2+) as a cofactor.

The enzyme catalyses isopentenyl diphosphate + (2E,6E,10E)-geranylgeranyl diphosphate = (2E,6E,10E,14E)-geranylfarnesyl diphosphate + diphosphate. Probably involved in biosynthesis of the precursor for C25 (sesterterpanyl chain) moiety of C25-C25 diether (2,3-di-O-sesterterpanyl-sn-glycero) membrane lipid. Catalyzes the condensation of isopentenyl pyrophosphate with the allylic pyrophosphates to yield all-trans geranylfarnesyl diphosphate (GFPP). Geranylgeranyl diphosphate (GGPP) is the preferred substrate, however methylallyl diphosphate (DMAPP), farnesyl diphosphate (FPP) and geranyl diphosphate (GPP) can also be used as allylic substrate. The sequence is that of Geranylfarnesyl diphosphate synthase (fgs) from Aeropyrum pernix.